Reading from the N-terminus, the 315-residue chain is MREPKPQEDLQAIIDDIYRELTPRLGEGKVADYIPQLARVDARHFGMAIVTTGGEVYRVGDAEMPFSIQSISKVFTLTLALGKHGENIWNRVGREPSGSAFNSIVQLEHEGGKPRNPFINAGAIRISDLILAGHTPKELIGEIVRFVRYLADDENIVIDHEVARSETATGYRNIALANFMRSFGRLDHPVEHVLGVYFHHCALAMTCSQLAKAGLFLAAGGTNPLTGHSVVSRQRARRINALMLTCGHYDGSGDFAYRVGLPGKSGVGGGIMAVAPGKASIAVWSPGLNDYGNSLLGSLALEMLAARTGWSVFGP.

Substrate is bound by residues Ser70, Asn120, Glu166, Asn173, Tyr197, Tyr249, and Val267.

The protein belongs to the glutaminase family. In terms of assembly, homotetramer.

The catalysed reaction is L-glutamine + H2O = L-glutamate + NH4(+). The chain is Glutaminase from Rhizobium meliloti (strain 1021) (Ensifer meliloti).